Consider the following 298-residue polypeptide: Cyclin-dependent kinase 2 (298 aa).

Positions phenylalanine 4–phenylalanine 286 constitute a Protein kinase domain. Residues isoleucine 10 to valine 18, lysine 33, glutamate 81 to leucine 83, and aspartate 86 contribute to the ATP site. At threonine 14 the chain carries Phosphothreonine. Tyrosine 15 carries the post-translational modification Phosphotyrosine. Aspartate 127 serves as the catalytic Proton acceptor. ATP contacts are provided by residues lysine 129–asparagine 132 and aspartate 145. Residue threonine 160 is modified to Phosphothreonine; by CAK.

The protein belongs to the protein kinase superfamily. CMGC Ser/Thr protein kinase family. CDC2/CDKX subfamily.

The enzyme catalyses L-seryl-[protein] + ATP = O-phospho-L-seryl-[protein] + ADP + H(+). The catalysed reaction is L-threonyl-[protein] + ATP = O-phospho-L-threonyl-[protein] + ADP + H(+). Phosphorylation at Thr-14 or Tyr-15 inactivates the enzyme, while phosphorylation at Thr-160 activates it. Its function is as follows. Serine/threonine-protein kinase involved in the control of the cell cycle; essential for meiosis, but dispensable for mitosis. Triggers duplication of centrosomes and DNA. Acts at the G1-S transition to promote the E2F transcriptional program and the initiation of DNA synthesis, and modulates G2 progression; controls the timing of entry into mitosis/meiosis by controlling the subsequent activation of cyclin B/CDK1 by phosphorylation, and coordinates the activation of cyclin B/CDK1 at the centrosome and in the nucleus. Crucial role in orchestrating a fine balance between cellular proliferation, cell death, and DNA repair in embryonic stem cells (ESCs). Activity of CDK2 is maximal during S phase and G2; activated by interaction with cyclin E during the early stages of DNA synthesis to permit G1-S transition, and subsequently activated by cyclin A2 (cyclin A1 in germ cells) during the late stages of DNA replication to drive the transition from S phase to mitosis, the G2 phase. The protein is Cyclin-dependent kinase 2 (cdk2) of Carassius auratus (Goldfish).